Here is a 329-residue protein sequence, read N- to C-terminus: Gamma-resorcylate decarboxylase (329 aa).

The Zn(2+) site is built by Glu8, His10, His167, and Asp290. Asp290 is a catalytic residue.

It belongs to the metallo-dependent hydrolases superfamily. ACMSD family. Requires Zn(2+) as cofactor.

It catalyses the reaction 2,6-dihydroxybenzoate + H(+) = resorcinol + CO2. It participates in aromatic compound metabolism. In terms of biological role, involved in the gamma-resorcylate (2,6-dihydroxybenzoate) catabolism. Catalyzes the reversible decarboxylation of gamma-resorcylate to resorcinol. This chain is Gamma-resorcylate decarboxylase, found in Rhodococcus jostii (strain RHA1).